Here is a 341-residue protein sequence, read N- to C-terminus: DNA-directed RNA polymerase subunit alpha (341 aa).

The alpha N-terminal domain (alpha-NTD) stretch occupies residues 1-237 (MLSLSKNWNA…EQLQLFISFE (237 aa)). Positions 247-341 (TDALPFSPYL…LSKRYEDSYN (95 aa)) are alpha C-terminal domain (alpha-CTD).

It belongs to the RNA polymerase alpha chain family. In terms of assembly, homodimer. The RNAP catalytic core consists of 2 alpha, 1 beta, 1 beta' and 1 omega subunit. When a sigma factor is associated with the core the holoenzyme is formed, which can initiate transcription.

It carries out the reaction RNA(n) + a ribonucleoside 5'-triphosphate = RNA(n+1) + diphosphate. DNA-dependent RNA polymerase catalyzes the transcription of DNA into RNA using the four ribonucleoside triphosphates as substrates. The protein is DNA-directed RNA polymerase subunit alpha of Rickettsia bellii (strain RML369-C).